The sequence spans 967 residues: uncharacterized protein (967 aa).

The signal sequence occupies residues 1–29; that stretch reads MKKKLKSVLIWFLIFTFNLSLGSFREVFA. BIG2 domains lie at 38-107 and 133-190; these read TAIT…QDGS and LPVG…VNDG.

This is an uncharacterized protein from Clostridium acetobutylicum (strain ATCC 824 / DSM 792 / JCM 1419 / IAM 19013 / LMG 5710 / NBRC 13948 / NRRL B-527 / VKM B-1787 / 2291 / W).